A 272-amino-acid polypeptide reads, in one-letter code: HMP-PP phosphatase (272 aa).

The active-site Nucleophile is D8. 3 residues coordinate Mg(2+): D8, D10, and D212.

The protein belongs to the HAD-like hydrolase superfamily. Cof family. Mg(2+) is required as a cofactor.

It carries out the reaction 4-amino-2-methyl-5-(diphosphooxymethyl)pyrimidine + H2O = 4-amino-2-methyl-5-(phosphooxymethyl)pyrimidine + phosphate + H(+). Its function is as follows. Catalyzes the hydrolysis of 4-amino-2-methyl-5-hydroxymethylpyrimidine pyrophosphate (HMP-PP) to 4-amino-2-methyl-5-hydroxymethylpyrimidine phosphate (HMP-P). This Klebsiella pneumoniae (strain 342) protein is HMP-PP phosphatase.